Consider the following 238-residue polypeptide: Ribose-5-phosphate isomerase A (238 aa).

Substrate is bound by residues 30-33 (SGST), 87-90 (DGAD), and 100-103 (KGGG). Residue glutamate 109 is the Proton acceptor of the active site. Lysine 127 serves as a coordination point for substrate.

The protein belongs to the ribose 5-phosphate isomerase family. As to quaternary structure, homodimer.

The catalysed reaction is aldehydo-D-ribose 5-phosphate = D-ribulose 5-phosphate. It participates in carbohydrate degradation; pentose phosphate pathway; D-ribose 5-phosphate from D-ribulose 5-phosphate (non-oxidative stage): step 1/1. Its function is as follows. Catalyzes the reversible conversion of ribose-5-phosphate to ribulose 5-phosphate. The protein is Ribose-5-phosphate isomerase A of Synechococcus sp. (strain WH7803).